A 310-amino-acid polypeptide reads, in one-letter code: Methionyl-tRNA formyltransferase (310 aa).

109–112 is a (6S)-5,6,7,8-tetrahydrofolate binding site; it reads SLLP.

This sequence belongs to the Fmt family.

It catalyses the reaction L-methionyl-tRNA(fMet) + (6R)-10-formyltetrahydrofolate = N-formyl-L-methionyl-tRNA(fMet) + (6S)-5,6,7,8-tetrahydrofolate + H(+). In terms of biological role, attaches a formyl group to the free amino group of methionyl-tRNA(fMet). The formyl group appears to play a dual role in the initiator identity of N-formylmethionyl-tRNA by promoting its recognition by IF2 and preventing the misappropriation of this tRNA by the elongation apparatus. This is Methionyl-tRNA formyltransferase from Pseudomonas putida (strain ATCC 47054 / DSM 6125 / CFBP 8728 / NCIMB 11950 / KT2440).